The sequence spans 123 residues: uncharacterized protein (123 aa).

A helical membrane pass occupies residues 34–53 (LPFFFLFLGNLGKFFFLWPL).

It is found in the membrane. This is an uncharacterized protein from Saccharomyces cerevisiae (strain ATCC 204508 / S288c) (Baker's yeast).